We begin with the raw amino-acid sequence, 863 residues long: Glycerol-3-phosphate acyltransferase (863 aa).

The interval 1 to 29 is disordered; it reads MPKKNSPLLPKETTTTQSSVDTSGSSNLT. The segment covering 12–29 has biased composition (polar residues); sequence ETTTTQSSVDTSGSSNLT. The HXXXXD motif signature appears at 343–348; the sequence is SHRSHI.

It belongs to the GPAT/DAPAT family.

The protein localises to the cell inner membrane. The catalysed reaction is sn-glycerol 3-phosphate + an acyl-CoA = a 1-acyl-sn-glycero-3-phosphate + CoA. It functions in the pathway phospholipid metabolism; CDP-diacylglycerol biosynthesis; CDP-diacylglycerol from sn-glycerol 3-phosphate: step 1/3. This chain is Glycerol-3-phosphate acyltransferase, found in Xylella fastidiosa (strain M12).